The following is a 389-amino-acid chain: S-adenosylmethionine synthase (389 aa).

Residue His15 participates in ATP binding. Asp17 provides a ligand contact to Mg(2+). Glu43 contributes to the K(+) binding site. Residues Glu56 and Gln99 each contribute to the L-methionine site. The interval 99–109 is flexible loop; the sequence is QSPDIAQGVNE. ATP contacts are provided by residues 166–168, 234–235, Asp243, 249–250, Ala266, and Lys270; these read DAK, RF, and RK. L-methionine is bound at residue Asp243. Lys274 is a binding site for L-methionine.

The protein belongs to the AdoMet synthase family. In terms of assembly, homotetramer; dimer of dimers. Mg(2+) is required as a cofactor. It depends on K(+) as a cofactor.

The protein resides in the cytoplasm. The catalysed reaction is L-methionine + ATP + H2O = S-adenosyl-L-methionine + phosphate + diphosphate. Its pathway is amino-acid biosynthesis; S-adenosyl-L-methionine biosynthesis; S-adenosyl-L-methionine from L-methionine: step 1/1. Functionally, catalyzes the formation of S-adenosylmethionine (AdoMet) from methionine and ATP. The overall synthetic reaction is composed of two sequential steps, AdoMet formation and the subsequent tripolyphosphate hydrolysis which occurs prior to release of AdoMet from the enzyme. The sequence is that of S-adenosylmethionine synthase from Neisseria meningitidis serogroup C / serotype 2a (strain ATCC 700532 / DSM 15464 / FAM18).